The sequence spans 86 residues: uncharacterized protein (86 aa).

Residues 4–24 (LFFTLIAFVAIILLMSIGFII) form a helical membrane-spanning segment.

It is found in the membrane. This is an uncharacterized protein from Haemophilus influenzae (strain ATCC 51907 / DSM 11121 / KW20 / Rd).